Consider the following 609-residue polypeptide: MTSATIPGLDTAPTNHQGLLSWVQEVAELTQPDRVVFADGSDEEFHRLSAQLVDAGTFTRLNDEKFPNSYLALSDPSDVARVESRTFICSEREIDAGPTNNWMDPSEMRTLMTDLYRGCMRGRTMYVVPFCMGPLGAEDPKLGVEITDSEYVVVSMKVMTRMGTAALEKMGQDGFFVKALHSVGAPLEDGQADVPWPCSDTKYITHFPETREIWSYGSGYGGNALLGKKCYSLRIASAMARDEGWLAEHMLILKLISPENKAYYIAAAFPSACGKTNLAMLQPTIPGWRAETLGDDIAWMRFGKDGRLYAVNPEFGFFGVAPGTNWKSNPNAMRTIAAGNTVFTNVALTDDGEVWWEGLEGDPQHLVDWKGNEWYFRETETTAAHPNSRYCTPMSQCPILAPEWDDPQGVPISAILFGGRRKTTVPLVTQARDWQHGVFIGATLGSEQTAAAEGKVGNVRRDPMAMLPFMGYNVGDYVQHWIDIGKNSDESKLPQVFFVNWFRRGEDHRFLWPGFGENSRVMKWIVDRIEHKAGGKTTPIGTVPTVEDLDLEGLDANPADVSEALAVNAQEWREELPLIEEWLQFIGEKLPTGIKDEFDALKERLRDAE.

Residues Arg81 and 220 to 222 contribute to the substrate site; that span reads YGG. Mn(2+)-binding residues include Lys229 and His249. Ser271 contributes to the substrate binding site. 272–277 contacts GTP; sequence ACGKTN. Cys273 is an active-site residue. Asp296 is a binding site for Mn(2+). 387–389 contributes to the substrate binding site; sequence NSR. Residues Arg389, Arg420, and 515–518 contribute to the GTP site; that span reads FGEN.

This sequence belongs to the phosphoenolpyruvate carboxykinase [GTP] family. As to quaternary structure, monomer. Mn(2+) serves as cofactor.

The protein resides in the cytoplasm. The enzyme catalyses oxaloacetate + GTP = phosphoenolpyruvate + GDP + CO2. It functions in the pathway carbohydrate biosynthesis; gluconeogenesis. In terms of biological role, catalyzes the conversion of oxaloacetate (OAA) to phosphoenolpyruvate (PEP), the rate-limiting step in the metabolic pathway that produces glucose from lactate and other precursors derived from the citric acid cycle. This Mycobacterium marinum (strain ATCC BAA-535 / M) protein is Phosphoenolpyruvate carboxykinase [GTP].